The primary structure comprises 344 residues: Holliday junction branch migration complex subunit RuvB (344 aa).

Positions 1-181 (MERIVTPAEM…FGVLCAMEYY (181 aa)) are large ATPase domain (RuvB-L). ATP-binding positions include Leu-20, Arg-21, Gly-62, Lys-65, Thr-66, Thr-67, 128–130 (EDY), Arg-171, Tyr-181, and Arg-218. A Mg(2+)-binding site is contributed by Thr-66. The small ATPAse domain (RuvB-S) stretch occupies residues 182-252 (DETQLKEIVI…EARDALELLE (71 aa)). Positions 255 to 344 (NQGFDKVDNK…SNKGQTSFFK (90 aa)) are head domain (RuvB-H). Positions 310 and 315 each coordinate DNA.

The protein belongs to the RuvB family. Homohexamer. Forms an RuvA(8)-RuvB(12)-Holliday junction (HJ) complex. HJ DNA is sandwiched between 2 RuvA tetramers; dsDNA enters through RuvA and exits via RuvB. An RuvB hexamer assembles on each DNA strand where it exits the tetramer. Each RuvB hexamer is contacted by two RuvA subunits (via domain III) on 2 adjacent RuvB subunits; this complex drives branch migration. In the full resolvosome a probable DNA-RuvA(4)-RuvB(12)-RuvC(2) complex forms which resolves the HJ.

It is found in the cytoplasm. The enzyme catalyses ATP + H2O = ADP + phosphate + H(+). In terms of biological role, the RuvA-RuvB-RuvC complex processes Holliday junction (HJ) DNA during genetic recombination and DNA repair, while the RuvA-RuvB complex plays an important role in the rescue of blocked DNA replication forks via replication fork reversal (RFR). RuvA specifically binds to HJ cruciform DNA, conferring on it an open structure. The RuvB hexamer acts as an ATP-dependent pump, pulling dsDNA into and through the RuvAB complex. RuvB forms 2 homohexamers on either side of HJ DNA bound by 1 or 2 RuvA tetramers; 4 subunits per hexamer contact DNA at a time. Coordinated motions by a converter formed by DNA-disengaged RuvB subunits stimulates ATP hydrolysis and nucleotide exchange. Immobilization of the converter enables RuvB to convert the ATP-contained energy into a lever motion, pulling 2 nucleotides of DNA out of the RuvA tetramer per ATP hydrolyzed, thus driving DNA branch migration. The RuvB motors rotate together with the DNA substrate, which together with the progressing nucleotide cycle form the mechanistic basis for DNA recombination by continuous HJ branch migration. Branch migration allows RuvC to scan DNA until it finds its consensus sequence, where it cleaves and resolves cruciform DNA. This Clostridium botulinum (strain Eklund 17B / Type B) protein is Holliday junction branch migration complex subunit RuvB.